Consider the following 523-residue polypeptide: Magnesium/proton exchanger 1 (523 aa).

11 helical membrane passes run 24-44 (LLPI…CFIG), 88-108 (IADV…LATI), 125-145 (GTLV…CVVM), 157-177 (LGVW…LYII), 185-205 (VITL…LLHA), 325-345 (VIGI…AFVP), 349-369 (IAHG…IAYG), 377-397 (ISCV…AAGT), 428-448 (VNIY…NYFV), 461-481 (LSFS…VLVL), and 495-515 (MWAW…VVLS).

It belongs to the Ca(2+):cation antiporter (CaCA) (TC 2.A.19) family. MHX subfamily.

Its subcellular location is the vacuole membrane. Functionally, vacuolar transporter that exchanges protons with Mg(2+), Zn(2+) and Fe(2+) ions. May control the partitioning of Mg(2+) and Zn(2+) between plant organs. The sequence is that of Magnesium/proton exchanger 1 (MHX1) from Oryza sativa subsp. japonica (Rice).